A 51-amino-acid polypeptide reads, in one-letter code: Large ribosomal subunit protein bL33 (51 aa).

This sequence belongs to the bacterial ribosomal protein bL33 family.

This Acidithiobacillus ferrooxidans (strain ATCC 53993 / BNL-5-31) (Leptospirillum ferrooxidans (ATCC 53993)) protein is Large ribosomal subunit protein bL33.